A 191-amino-acid chain; its full sequence is dTTP/UTP pyrophosphatase (191 aa).

Catalysis depends on D70, which acts as the Proton acceptor.

It belongs to the Maf family. YhdE subfamily. A divalent metal cation serves as cofactor.

The protein resides in the cytoplasm. It carries out the reaction dTTP + H2O = dTMP + diphosphate + H(+). The enzyme catalyses UTP + H2O = UMP + diphosphate + H(+). In terms of biological role, nucleoside triphosphate pyrophosphatase that hydrolyzes dTTP and UTP. May have a dual role in cell division arrest and in preventing the incorporation of modified nucleotides into cellular nucleic acids. The sequence is that of dTTP/UTP pyrophosphatase from Clostridium novyi (strain NT).